Consider the following 160-residue polypeptide: Small ribosomal subunit protein uS7 (160 aa).

This sequence belongs to the universal ribosomal protein uS7 family. Part of the 30S ribosomal subunit. Contacts proteins S9 and S11.

Functionally, one of the primary rRNA binding proteins, it binds directly to 16S rRNA where it nucleates assembly of the head domain of the 30S subunit. Is located at the subunit interface close to the decoding center, probably blocks exit of the E-site tRNA. In Rickettsia conorii (strain ATCC VR-613 / Malish 7), this protein is Small ribosomal subunit protein uS7.